The following is an 855-amino-acid chain: Suppressor of tumorigenicity 14 protein homolog (855 aa).

Topologically, residues 1 to 55 (MGSNRGRKAGGGSQDFGAGLKYNSRLENMNGFEEGVEFLPANNAKKVEKRGPRRW) are cytoplasmic. Residue serine 13 is modified to Phosphoserine. A helical; Signal-anchor for type II membrane protein membrane pass occupies residues 56–76 (VVLVAVLFSFLLLSLMAGLLV). Residues 77 to 855 (WHFHYRNVRV…RDWIKEHTGV (779 aa)) lie on the Extracellular side of the membrane. The 118-residue stretch at 86–203 (VQKVFNGHLR…TSVVAFPIDP (118 aa)) folds into the SEA domain. N-linked (GlcNAc...) asparagine glycosylation occurs at asparagine 107. A disulfide bridge links cysteine 214 with cysteine 244. CUB domains lie at 214–331 (CSFA…EATF) and 340–444 (CGGF…LAEY). 2 N-linked (GlcNAc...) asparagine glycosylation sites follow: asparagine 302 and asparagine 365. Disulfide bonds link cysteine 340–cysteine 366 and cysteine 397–cysteine 410. N-linked (GlcNAc...) asparagine glycosylation occurs at asparagine 421. 4 consecutive LDL-receptor class A domains span residues 451-488 (DPCP…YCRC), 489-522 (NATH…DEEG), 523-561 (CSCP…SCDS), and 565-604 (VSCT…NCDC). 13 disulfides stabilise this stretch: cysteine 453/cysteine 464, cysteine 459/cysteine 477, cysteine 471/cysteine 486, cysteine 488/cysteine 501, cysteine 496/cysteine 514, cysteine 508/cysteine 523, cysteine 525/cysteine 537, cysteine 532/cysteine 550, cysteine 544/cysteine 559, cysteine 567/cysteine 579, cysteine 574/cysteine 593, cysteine 587/cysteine 602, and cysteine 641/cysteine 657. The N-linked (GlcNAc...) asparagine glycan is linked to asparagine 489. Residues 615 to 854 (VVGGTNADEG…VRDWIKEHTG (240 aa)) enclose the Peptidase S1 domain. Residues histidine 656 and aspartate 711 each act as charge relay system in the active site. Asparagine 772 is a glycosylation site (N-linked (GlcNAc...) asparagine). 2 disulfide bridges follow: cysteine 776/cysteine 790 and cysteine 801/cysteine 830. Residue serine 805 is the Charge relay system of the active site.

Belongs to the peptidase S1 family. As to quaternary structure, interacts with CDCP1. May interact with TMEFF1. Highly expressed in intestine, kidney, lung, and thymus. Not expressed in skeletal muscle, liver, heart, testis and brain.

The protein resides in the membrane. It catalyses the reaction Cleaves various synthetic substrates with Arg or Lys at the P1 position and prefers small side-chain amino acids, such as Ala and Gly, at the P2 position.. Functionally, exhibits trypsin-like activity as defined by cleavage of synthetic substrates with Arg or Lys as the P1 site. Involved in the terminal differentiation of keratinocytes through prostasin (PRSS8) activation and filaggrin (FLG) processing. Proteolytically cleaves and therefore activates TMPRSS13. The protein is Suppressor of tumorigenicity 14 protein homolog (St14) of Mus musculus (Mouse).